A 502-amino-acid polypeptide reads, in one-letter code: Tryptophan decarboxylase TDC1 (502 aa).

Over residues 1 to 18 the composition is skewed to polar residues; it reads MGSLDSNYDTESPASVGQ. Positions 1 to 21 are disordered; sequence MGSLDSNYDTESPASVGQFNP. At lysine 319 the chain carries N6-(pyridoxal phosphate)lysine.

Belongs to the group II decarboxylase family. It depends on pyridoxal 5'-phosphate as a cofactor. In terms of tissue distribution, highly expressed in apex. Expressed in young stem and bark tissues. Expressed at low levels in leaves, fruits and seeds.

It carries out the reaction L-tryptophan + H(+) = tryptamine + CO2. Involved in the biosynthesis of tryptamine. Supplies tryptamine for the indole moiety of camptothecin (CPT), an anti-cancer monoterpene alkaloid. Represents a key step in monoterpene indole alkaloid biosynthesis. Is specific for tryptophan, and inactive against tyrosine, phenylalanine and 3,4-dihydroxyphenylalanine (dopa). The sequence is that of Tryptophan decarboxylase TDC1 from Camptotheca acuminata (Happy tree).